The following is a 486-amino-acid chain: Citrate synthase 3, mitochondrial (486 aa).

A mitochondrion-targeting transit peptide spans 1–23 (MVQRLLPGAHICRRSFNSSAIIK). Catalysis depends on residues H315, H361, and D419. The Microbody targeting signal motif lies at 484-486 (NKL).

This sequence belongs to the citrate synthase family.

The protein resides in the mitochondrion. The catalysed reaction is oxaloacetate + acetyl-CoA + H2O = citrate + CoA + H(+). It functions in the pathway carbohydrate metabolism; tricarboxylic acid cycle; isocitrate from oxaloacetate: step 1/2. Functionally, dual specificity mitochondrial citrate and methylcitrate synthase with similar catalytic efficiency with both acetyl-CoA and propionyl-CoA. The chain is Citrate synthase 3, mitochondrial from Saccharomyces cerevisiae (strain ATCC 204508 / S288c) (Baker's yeast).